We begin with the raw amino-acid sequence, 68 residues long: ATP synthase F(0) complex subunit 8 (68 aa).

Residues 8–24 (TWFTIIMAMLPTLYLIT) form a helical membrane-spanning segment. K54 carries the N6-acetyllysine; alternate modification. K54 carries the post-translational modification N6-succinyllysine; alternate. Residue K57 is modified to N6-acetyllysine.

It belongs to the ATPase protein 8 family. In terms of assembly, component of the ATP synthase complex composed at least of ATP5F1A/subunit alpha, ATP5F1B/subunit beta, ATP5MC1/subunit c (homooctomer), MT-ATP6/subunit a, MT-ATP8/subunit 8, ATP5ME/subunit e, ATP5MF/subunit f, ATP5MG/subunit g, ATP5MK/subunit k, ATP5MJ/subunit j, ATP5F1C/subunit gamma, ATP5F1D/subunit delta, ATP5F1E/subunit epsilon, ATP5PF/subunit F6, ATP5PB/subunit b, ATP5PD/subunit d, ATP5PO/subunit OSCP. ATP synthase complex consists of a soluble F(1) head domain (subunits alpha(3) and beta(3)) - the catalytic core - and a membrane F(0) domain - the membrane proton channel (subunits c, a, 8, e, f, g, k and j). These two domains are linked by a central stalk (subunits gamma, delta, and epsilon) rotating inside the F1 region and a stationary peripheral stalk (subunits F6, b, d, and OSCP). Interacts with PRICKLE3.

It is found in the mitochondrion membrane. Functionally, subunit 8, of the mitochondrial membrane ATP synthase complex (F(1)F(0) ATP synthase or Complex V) that produces ATP from ADP in the presence of a proton gradient across the membrane which is generated by electron transport complexes of the respiratory chain. ATP synthase complex consist of a soluble F(1) head domain - the catalytic core - and a membrane F(1) domain - the membrane proton channel. These two domains are linked by a central stalk rotating inside the F(1) region and a stationary peripheral stalk. During catalysis, ATP synthesis in the catalytic domain of F(1) is coupled via a rotary mechanism of the central stalk subunits to proton translocation. In vivo, can only synthesize ATP although its ATP hydrolase activity can be activated artificially in vitro. Part of the complex F(0) domain. The sequence is that of ATP synthase F(0) complex subunit 8 from Papio hamadryas (Hamadryas baboon).